The sequence spans 276 residues: Ribosomal RNA small subunit methyltransferase A (276 aa).

S-adenosyl-L-methionine is bound by residues asparagine 15, leucine 17, glycine 42, glutamate 63, aspartate 88, and asparagine 111.

The protein belongs to the class I-like SAM-binding methyltransferase superfamily. rRNA adenine N(6)-methyltransferase family. RsmA subfamily.

It localises to the cytoplasm. It carries out the reaction adenosine(1518)/adenosine(1519) in 16S rRNA + 4 S-adenosyl-L-methionine = N(6)-dimethyladenosine(1518)/N(6)-dimethyladenosine(1519) in 16S rRNA + 4 S-adenosyl-L-homocysteine + 4 H(+). Specifically dimethylates two adjacent adenosines (A1518 and A1519) in the loop of a conserved hairpin near the 3'-end of 16S rRNA in the 30S particle. May play a critical role in biogenesis of 30S subunits. The chain is Ribosomal RNA small subunit methyltransferase A from Geobacter sulfurreducens (strain ATCC 51573 / DSM 12127 / PCA).